Consider the following 188-residue polypeptide: dITP/XTP pyrophosphatase (188 aa).

7–12 (TGNIGK) contributes to the substrate binding site. 2 residues coordinate Mg(2+): glutamate 36 and aspartate 65. Aspartate 65 acts as the Proton acceptor in catalysis. Residues serine 66, 141–144 (FGYD), lysine 164, and 169–170 (HR) each bind substrate.

Belongs to the HAM1 NTPase family. As to quaternary structure, homodimer. Mg(2+) serves as cofactor.

It carries out the reaction XTP + H2O = XMP + diphosphate + H(+). The catalysed reaction is dITP + H2O = dIMP + diphosphate + H(+). It catalyses the reaction ITP + H2O = IMP + diphosphate + H(+). Its function is as follows. Pyrophosphatase that catalyzes the hydrolysis of nucleoside triphosphates to their monophosphate derivatives, with a high preference for the non-canonical purine nucleotides XTP (xanthosine triphosphate), dITP (deoxyinosine triphosphate) and ITP. Seems to function as a house-cleaning enzyme that removes non-canonical purine nucleotides from the nucleotide pool, thus preventing their incorporation into DNA/RNA and avoiding chromosomal lesions. This chain is dITP/XTP pyrophosphatase, found in Methanopyrus kandleri (strain AV19 / DSM 6324 / JCM 9639 / NBRC 100938).